Consider the following 215-residue polypeptide: 3-dehydroquinate dehydratase (215 aa).

3-dehydroquinate contacts are provided by residues 27–29 (ELR) and Arg-54. His-112 (proton donor/acceptor) is an active-site residue. Lys-139 (schiff-base intermediate with substrate) is an active-site residue. The 3-dehydroquinate site is built by Arg-176 and Gln-198.

Belongs to the type-I 3-dehydroquinase family. As to quaternary structure, homodimer.

It catalyses the reaction 3-dehydroquinate = 3-dehydroshikimate + H2O. The protein operates within metabolic intermediate biosynthesis; chorismate biosynthesis; chorismate from D-erythrose 4-phosphate and phosphoenolpyruvate: step 3/7. Involved in the third step of the chorismate pathway, which leads to the biosynthesis of aromatic amino acids. Catalyzes the cis-dehydration of 3-dehydroquinate (DHQ) and introduces the first double bond of the aromatic ring to yield 3-dehydroshikimate. The chain is 3-dehydroquinate dehydratase from Pyrococcus abyssi (strain GE5 / Orsay).